The primary structure comprises 145 residues: D-aminoacyl-tRNA deacylase (145 aa).

The Gly-cisPro motif, important for rejection of L-amino acids motif lies at Gly137–Pro138.

This sequence belongs to the DTD family. As to quaternary structure, homodimer.

Its subcellular location is the cytoplasm. It carries out the reaction glycyl-tRNA(Ala) + H2O = tRNA(Ala) + glycine + H(+). The enzyme catalyses a D-aminoacyl-tRNA + H2O = a tRNA + a D-alpha-amino acid + H(+). An aminoacyl-tRNA editing enzyme that deacylates mischarged D-aminoacyl-tRNAs. Also deacylates mischarged glycyl-tRNA(Ala), protecting cells against glycine mischarging by AlaRS. Acts via tRNA-based rather than protein-based catalysis; rejects L-amino acids rather than detecting D-amino acids in the active site. By recycling D-aminoacyl-tRNA to D-amino acids and free tRNA molecules, this enzyme counteracts the toxicity associated with the formation of D-aminoacyl-tRNA entities in vivo and helps enforce protein L-homochirality. The polypeptide is D-aminoacyl-tRNA deacylase (Teredinibacter turnerae (strain ATCC 39867 / T7901)).